A 502-amino-acid chain; its full sequence is Probable cytosol aminopeptidase (502 aa).

2 residues coordinate Mn(2+): Lys-269 and Asp-274. Residue Lys-281 is part of the active site. Positions 292, 351, and 353 each coordinate Mn(2+). Residue Arg-355 is part of the active site.

This sequence belongs to the peptidase M17 family. Mn(2+) is required as a cofactor.

The protein localises to the cytoplasm. The catalysed reaction is Release of an N-terminal amino acid, Xaa-|-Yaa-, in which Xaa is preferably Leu, but may be other amino acids including Pro although not Arg or Lys, and Yaa may be Pro. Amino acid amides and methyl esters are also readily hydrolyzed, but rates on arylamides are exceedingly low.. The enzyme catalyses Release of an N-terminal amino acid, preferentially leucine, but not glutamic or aspartic acids.. In terms of biological role, presumably involved in the processing and regular turnover of intracellular proteins. Catalyzes the removal of unsubstituted N-terminal amino acids from various peptides. In Aliivibrio fischeri (strain MJ11) (Vibrio fischeri), this protein is Probable cytosol aminopeptidase.